We begin with the raw amino-acid sequence, 1304 residues long: Histone-lysine N-methyltransferase met-2 (1304 aa).

Residues Met-1–Leu-16 show a composition bias toward polar residues. The interval Met-1–Thr-31 is disordered. A coiled-coil region spans residues Asn-97–Glu-129. Residues Phe-834–Ala-909 enclose the MBD domain. Residues Ser-971 to Asn-1049 form the Pre-SET domain. Residues Cys-973, Cys-975, Cys-979, Cys-985, Cys-987, Cys-1030, Cys-1034, Cys-1036, and Cys-1041 each contribute to the Zn(2+) site. Positions Tyr-1052 to Gln-1277 constitute an SET domain. S-adenosyl-L-methionine contacts are provided by residues Ser-1062–Trp-1064, Asp-1098, and Tyr-1100. Residues Glu-1113–Asp-1122 show a composition bias toward basic and acidic residues. A disordered region spans residues Glu-1113–Ser-1201. Positions Asp-1128–Asp-1144 are enriched in acidic residues. The segment covering Lys-1152–Arg-1165 has biased composition (basic and acidic residues). The span at Leu-1166–Gly-1178 shows a compositional bias: basic residues. A compositionally biased stretch (basic and acidic residues) spans Ser-1182–Ser-1201. S-adenosyl-L-methionine is bound by residues Arg-1231 and Asn-1234–His-1235. The Zn(2+) site is built by Cys-1237, Cys-1290, Cys-1292, and Cys-1297. A Post-SET domain is found at Thr-1286–Leu-1302.

This sequence belongs to the class V-like SAM-binding methyltransferase superfamily.

The protein resides in the nucleus. The protein localises to the chromosome. It localises to the cytoplasm. The catalysed reaction is N(6)-methyl-L-lysyl(9)-[histone H3] + S-adenosyl-L-methionine = N(6),N(6)-dimethyl-L-lysyl(9)-[histone H3] + S-adenosyl-L-homocysteine + H(+). The enzyme catalyses L-lysyl(9)-[histone H3] + S-adenosyl-L-methionine = N(6)-methyl-L-lysyl(9)-[histone H3] + S-adenosyl-L-homocysteine + H(+). Histone methyltransferase which is required for the mono- and dimethylation of 'Lys-9' of histone H3. This increases the efficiency of set-25-mediated trimethylation of histone H3 'Lys-9'. Involved in the transcriptional repression of lin-3 which is required for the negative regulation of vulval cell fate specification during postembryonic development. Has a role in blocking checkpoint signaling and mediating the transcriptional silencing of meiotic sex chromosome inactivation; a mechanism which enables checkpoint proteins to distinguish between the partnerless male X chromosome and asynapsed chromosomes thereby shielding the lone X from inappropriate activation of an apoptotic program. Operates redundantly with set-25 to position chromatin at the nuclear periphery. Required for small-RNA-induced H3K9 methylation. Together with set-25, protects and stabilizes repeat-rich genomic regions by suppressing transcription-induced replication stress through methylation of H3K9. Together with spr-5, required for transgenerational fertility. The chain is Histone-lysine N-methyltransferase met-2 (met-2) from Caenorhabditis elegans.